Reading from the N-terminus, the 473-residue chain is Photosystem II CP43 reaction center protein (473 aa).

The propeptide occupies 1 to 14 (MKTLYSLRRFYPVE). T15 carries the N-acetylthreonine modification. A Phosphothreonine modification is found at T15. The next 5 membrane-spanning stretches (helical) occupy residues 69 to 93 (LFEV…PHLA), 134 to 155 (LLGP…KDRN), 178 to 200 (KALY…RKIT), 255 to 275 (KPFA…LSYS), and 291 to 312 (WFNN…ASQA). E367 is a binding site for [CaMn4O5] cluster. The chain crosses the membrane as a helical span at residues 447 to 471 (RARAAAAGFEKGIDRDFEPVLSMTP).

It belongs to the PsbB/PsbC family. PsbC subfamily. As to quaternary structure, PSII is composed of 1 copy each of membrane proteins PsbA, PsbB, PsbC, PsbD, PsbE, PsbF, PsbH, PsbI, PsbJ, PsbK, PsbL, PsbM, PsbT, PsbX, PsbY, PsbZ, Psb30/Ycf12, at least 3 peripheral proteins of the oxygen-evolving complex and a large number of cofactors. It forms dimeric complexes. Binds multiple chlorophylls and provides some of the ligands for the Ca-4Mn-5O cluster of the oxygen-evolving complex. It may also provide a ligand for a Cl- that is required for oxygen evolution. PSII binds additional chlorophylls, carotenoids and specific lipids. is required as a cofactor.

Its subcellular location is the plastid. It localises to the chloroplast thylakoid membrane. Functionally, one of the components of the core complex of photosystem II (PSII). It binds chlorophyll and helps catalyze the primary light-induced photochemical processes of PSII. PSII is a light-driven water:plastoquinone oxidoreductase, using light energy to abstract electrons from H(2)O, generating O(2) and a proton gradient subsequently used for ATP formation. The polypeptide is Photosystem II CP43 reaction center protein (Daucus carota (Wild carrot)).